A 224-amino-acid chain; its full sequence is uncharacterized protein (224 aa).

Helical transmembrane passes span 39 to 59 (LICL…FYSI), 70 to 90 (YLSL…ILFA), 103 to 123 (VFVF…IGAI), and 139 to 159 (MHIG…FLIT).

It localises to the membrane. This is an uncharacterized protein from Dictyostelium discoideum (Social amoeba).